The following is a 114-amino-acid chain: Large ribosomal subunit protein bL19 (114 aa).

The protein belongs to the bacterial ribosomal protein bL19 family.

Its function is as follows. This protein is located at the 30S-50S ribosomal subunit interface and may play a role in the structure and function of the aminoacyl-tRNA binding site. The protein is Large ribosomal subunit protein bL19 (rplS) of Listeria monocytogenes serovar 1/2a (strain ATCC BAA-679 / EGD-e).